The primary structure comprises 240 residues: MRFDVVTLFPDFFTSPLASGLLGKALAKQIAEVYLLNPRDFTTDKHHRVDDESYGGGVGMVLKPEPIFAAVESLPVLPRREVILMSPQGERLDQALLQSLADNFDQLVVICGHYEGVDERVVDHLVTREISLGDFVLTCGEIPALTLLNGVIRLLPGTVGKAESLQNESFIDGLLDFPHYTRPADFRGWPVPQVLRSGHHAEVDRWRRTQQIQRTRDRRPDLYQRWLNSLPPDSLQDFTV.

Residues Gly-112 and 132–137 (LGDFVL) each bind S-adenosyl-L-methionine.

This sequence belongs to the RNA methyltransferase TrmD family. In terms of assembly, homodimer.

Its subcellular location is the cytoplasm. The catalysed reaction is guanosine(37) in tRNA + S-adenosyl-L-methionine = N(1)-methylguanosine(37) in tRNA + S-adenosyl-L-homocysteine + H(+). Its function is as follows. Specifically methylates guanosine-37 in various tRNAs. The protein is tRNA (guanine-N(1)-)-methyltransferase of Cyanothece sp. (strain PCC 7425 / ATCC 29141).